Consider the following 590-residue polypeptide: tRNA-guanine(15) transglycosylase (590 aa).

The Nucleophile role is filled by Asp-90. Asp-125 contributes to the substrate binding site. The Zn(2+) site is built by Cys-278, Cys-280, and Cys-283. A PUA domain is found at 502–577 (KGRVVVKGLF…HPFIIIRRHV (76 aa)).

This sequence belongs to the archaeosine tRNA-ribosyltransferase family. Zn(2+) is required as a cofactor.

It carries out the reaction guanosine(15) in tRNA + 7-cyano-7-deazaguanine = 7-cyano-7-carbaguanosine(15) in tRNA + guanine. It functions in the pathway tRNA modification; archaeosine-tRNA biosynthesis. Exchanges the guanine residue with 7-cyano-7-deazaguanine (preQ0) at position 15 in the dihydrouridine loop (D-loop) of archaeal tRNAs. This chain is tRNA-guanine(15) transglycosylase, found in Korarchaeum cryptofilum (strain OPF8).